Here is a 382-residue protein sequence, read N- to C-terminus: Ribosomal RNA large subunit methyltransferase G (382 aa).

Belongs to the methyltransferase superfamily. RlmG family.

Its subcellular location is the cytoplasm. It carries out the reaction guanosine(1835) in 23S rRNA + S-adenosyl-L-methionine = N(2)-methylguanosine(1835) in 23S rRNA + S-adenosyl-L-homocysteine + H(+). Functionally, specifically methylates the guanine in position 1835 (m2G1835) of 23S rRNA. The chain is Ribosomal RNA large subunit methyltransferase G from Aliivibrio fischeri (strain MJ11) (Vibrio fischeri).